The primary structure comprises 383 residues: U-box domain-containing protein 63 (383 aa).

The interval 166–186 is disordered; it reads PDGNVSNSHRNTQQKRDFASV. Residues 201 to 273 form the U-box domain; that stretch reads SLKAILSDPV…HAFRQEEDSD (73 aa).

The catalysed reaction is S-ubiquitinyl-[E2 ubiquitin-conjugating enzyme]-L-cysteine + [acceptor protein]-L-lysine = [E2 ubiquitin-conjugating enzyme]-L-cysteine + N(6)-ubiquitinyl-[acceptor protein]-L-lysine.. The protein operates within protein modification; protein ubiquitination. Its function is as follows. Functions as an E3 ubiquitin ligase. This Arabidopsis thaliana (Mouse-ear cress) protein is U-box domain-containing protein 63 (PUB63).